Here is a 161-residue protein sequence, read N- to C-terminus: MKFFIVLALCIVGAIADPVSSDQANAIRASWAGVKHNEVDILAAVFSDHPDIQARFPQFAGKDLASIKDTGAFATHAGRIVGFISEIVALVGNESNAPAMATLINELSTSHHNRGITKGQFNEFRSSLVSYLSSHASWNDATADAWTHGLDNIFGMIFAHL.

The first 16 residues, 1–16 (MKFFIVLALCIVGAIA), serve as a signal peptide directing secretion. The Globin domain occupies 18–161 (PVSSDQANAI…NIFGMIFAHL (144 aa)). Histidine 76 and histidine 111 together coordinate heme b.

This sequence belongs to the globin family. Homodimer.

This chain is Globin CTT-IX (CTT-9), found in Chironomus thummi thummi (Midge).